Here is a 119-residue protein sequence, read N- to C-terminus: ATP-dependent Clp protease adapter protein ClpS (119 aa).

A disordered region spans residues Met-1–Lys-33.

This sequence belongs to the ClpS family. In terms of assembly, binds to the N-terminal domain of the chaperone ClpA.

Functionally, involved in the modulation of the specificity of the ClpAP-mediated ATP-dependent protein degradation. This is ATP-dependent Clp protease adapter protein ClpS from Variovorax paradoxus (strain S110).